We begin with the raw amino-acid sequence, 139 residues long: Angiogenin (139 aa).

An N-terminal signal peptide occupies residues 1 to 21 (MAMSSLWWTAILLLALTVSMC). The Proton acceptor role is filled by histidine 34. 3 disulfides stabilise this stretch: cysteine 49–cysteine 102, cysteine 64–cysteine 111, and cysteine 82–cysteine 126. Residues cysteine 102 and valine 122 each coordinate tRNA. Histidine 133 acts as the Proton donor in catalysis.

It belongs to the pancreatic ribonuclease family. As to quaternary structure, homodimer. Interacts with RNH1; inhibiting ANG ribonuclease activity.

It is found in the secreted. Its subcellular location is the nucleus. The protein resides in the nucleolus. The protein localises to the cytoplasm. It localises to the stress granule. Functionally, secreted ribonuclease that can either promote or restrict cell proliferation of target cells, depending on the context. Endocytosed in target cells via its receptor PLXNB2 and translocates to the cytoplasm or nucleus. Under stress conditions, localizes to the cytoplasm and promotes the assembly of stress granules (SGs): specifically cleaves a subset of tRNAs within anticodon loops to produce tRNA-derived stress-induced fragments (tiRNAs), resulting in translation repression and inhibition of cell proliferation. tiRNas also prevent formation of apoptosome, thereby promoting cell survival. Preferentially cleaves RNAs between a pyrimidine and an adenosine residue, suggesting that it cleaves the anticodon loop of tRNA(Ala) (32-UUAGCAU-38) after positions 33 and 36. Cleaves a subset of tRNAs, including tRNA(Ala), tRNA(Glu), tRNA(Gly), tRNA(Lys), tRNA(Val), tRNA(His), tRNA(Asp) and tRNA(Sec). Under growth conditions and in differentiated cells, translocates to the nucleus and stimulates ribosomal RNA (rRNA) transcription, including that containing the initiation site sequences of 45S rRNA, thereby promoting cell growth and proliferation. Angiogenin induces vascularization of normal and malignant tissues via its ability to promote rRNA transcription. This Gallus gallus (Chicken) protein is Angiogenin (ANG).